The chain runs to 82 residues: Musculoskeletal embryonic nuclear protein 1 (82 aa).

The tract at residues Met1–Gln34 is disordered. Ser2 carries the phosphoserine modification. The Nuclear localization signal signature appears at Pro10–Val18.

It belongs to the MUSTN1 family.

The protein localises to the nucleus. It localises to the cytoplasm. The protein resides in the secreted. It is found in the extracellular space. Required for chondrocyte development and proliferation. Plays a role in myoblast differentiation and fusion. Modulates skeletal muscle extracellular matrix composition. Plays a role in skeletal muscle function. Plays a role in glucose homeostasis. This is Musculoskeletal embryonic nuclear protein 1 (MUSTN1) from Bos taurus (Bovine).